A 210-amino-acid polypeptide reads, in one-letter code: MRLRKVKDALVRVQDSPYFSNPEQLSTIESESLFVEIGCGKSWFLSQQAQQNPKCFFVGIEREPTIVLKAINKVNRLEVKPRNLLITCLDANQLTEYLKPQSISKIFINFPDPWPKKRHTLRRLTAPHFLKQFHQLLKKQGLIEFKTDNDQLFEFTLEVLQKTVAHFKIIEQTTDLHNSPLTSTNIMTEYEQRFVSLGVKIKKLTLEKLN.

S-adenosyl-L-methionine contacts are provided by E36, E61, D90, and D112. D112 is an active-site residue. Substrate is bound by residues K116, D148, and 188–191 (TEYE).

It belongs to the class I-like SAM-binding methyltransferase superfamily. TrmB family.

It carries out the reaction guanosine(46) in tRNA + S-adenosyl-L-methionine = N(7)-methylguanosine(46) in tRNA + S-adenosyl-L-homocysteine. It functions in the pathway tRNA modification; N(7)-methylguanine-tRNA biosynthesis. Catalyzes the formation of N(7)-methylguanine at position 46 (m7G46) in tRNA. In Mycoplasma pneumoniae (strain ATCC 29342 / M129 / Subtype 1) (Mycoplasmoides pneumoniae), this protein is tRNA (guanine-N(7)-)-methyltransferase.